A 400-amino-acid chain; its full sequence is Phosphoglycerate kinase (400 aa).

Residues 23–25 (DLN), Arg38, 61–64 (HFGR), Arg120, and Arg153 each bind substrate. Residues Lys203, Glu325, and 355-358 (GGDT) each bind ATP.

Belongs to the phosphoglycerate kinase family. In terms of assembly, monomer.

It localises to the cytoplasm. It carries out the reaction (2R)-3-phosphoglycerate + ATP = (2R)-3-phospho-glyceroyl phosphate + ADP. Its pathway is carbohydrate degradation; glycolysis; pyruvate from D-glyceraldehyde 3-phosphate: step 2/5. The sequence is that of Phosphoglycerate kinase from Rhizobium leguminosarum bv. trifolii (strain WSM2304).